The chain runs to 277 residues: NAD kinase (277 aa).

The Proton acceptor role is filled by aspartate 67. NAD(+) contacts are provided by residues 67–68 (DG), arginine 72, 137–138 (NE), lysine 148, arginine 165, aspartate 167, 178–183 (TGYAMS), leucine 202, and glutamine 236.

It belongs to the NAD kinase family. Requires a divalent metal cation as cofactor.

Its subcellular location is the cytoplasm. The enzyme catalyses NAD(+) + ATP = ADP + NADP(+) + H(+). Functionally, involved in the regulation of the intracellular balance of NAD and NADP, and is a key enzyme in the biosynthesis of NADP. Catalyzes specifically the phosphorylation on 2'-hydroxyl of the adenosine moiety of NAD to yield NADP. This is NAD kinase from Pyrococcus abyssi (strain GE5 / Orsay).